The chain runs to 370 residues: Cytochrome b (370 aa).

4 helical membrane-spanning segments follow: residues 25 to 45 (FGSM…FLAV), 69 to 90 (WMMQ…YIHI), 105 to 125 (WLSG…GYVL), and 170 to 190 (FFAL…LHIL). Heme b-binding residues include His-75 and His-89. Positions 174 and 188 each coordinate heme b. His-193 lines the a ubiquinone pocket. 4 helical membrane passes run 218 to 238 (YKDM…VSFF), 280 to 300 (LGGA…PFTH), 312 to 332 (LMQL…WTAT), and 339 to 358 (FTTI…ISNP).

It belongs to the cytochrome b family. The cytochrome bc1 complex contains 3 respiratory subunits (MT-CYB, CYC1 and UQCRFS1), 2 core proteins (UQCRC1 and UQCRC2) and probably 6 low-molecular weight proteins. It depends on heme b as a cofactor.

It localises to the mitochondrion inner membrane. Component of the ubiquinol-cytochrome c reductase complex (complex III or cytochrome b-c1 complex) that is part of the mitochondrial respiratory chain. The b-c1 complex mediates electron transfer from ubiquinol to cytochrome c. Contributes to the generation of a proton gradient across the mitochondrial membrane that is then used for ATP synthesis. This chain is Cytochrome b (MT-CYB), found in Chilabothrus striatus (Haitian boa constrictor).